Consider the following 329-residue polypeptide: Mitochondrial substrate carrier family protein W (329 aa).

Residues 1–39 are Mitochondrial intermembrane-facing; sequence MTTNNSNDNNKRYGIIKQQLQQQQQQHHQQHEQHSRLVE. Solcar repeat units follow at residues 34–119, 133–221, and 231–321; these read HSRL…CKEL, ESPL…FKSI, and LGIV…IKKF. A helical transmembrane segment spans residues 40 to 60; that stretch reads MTAGCGAGFMASLFTTPLDVI. At 61 to 90 the chain is on the mitochondrial matrix side; it reads KTTLQVDNSSNKTIMSTVKSILDRKGGVKN. A helical membrane pass occupies residues 91-111; that stretch reads LYLGLKPTLVGQIPSWAVYFS. Over 112-135 the chain is Mitochondrial intermembrane; the sequence is TYTFCKELFTKENDKHSLLEKESP. Residues 136–156 form a helical membrane-spanning segment; the sequence is LIFMTSAIIAGAATSICTSPI. Residues 157–193 are Mitochondrial matrix-facing; the sequence is WLIKTRFITQEMVGRQKKYRGIVHSMVSIYHEEGFRG. A helical transmembrane segment spans residues 194–214; the sequence is LYKGLGPSLLGVLHVGVQFPL. Residues 215 to 230 are Mitochondrial intermembrane-facing; it reads YEKFKSILKEKNKNKE. The chain crosses the membrane as a helical span at residues 231–251; that stretch reads LGIVEIMIASSVSKIIASVVA. At 252–296 the chain is on the mitochondrial matrix side; sequence YPHEVLRARSQDSSPDSPNRTYRGNIIQMFKQIVREEGWRGLYRG. Residues 297 to 315 form a helical membrane-spanning segment; the sequence is MGVNLLRVTPSCVITFTSY. Residues 316–329 lie on the Mitochondrial intermembrane side of the membrane; it reads EYIKKFLSQNQNHF.

It belongs to the mitochondrial carrier (TC 2.A.29) family.

It is found in the mitochondrion inner membrane. In terms of biological role, mitochondrial solute carriers shuttle metabolites, nucleotides, and cofactors through the mitochondrial inner membrane. The polypeptide is Mitochondrial substrate carrier family protein W (mcfW) (Dictyostelium discoideum (Social amoeba)).